A 427-amino-acid polypeptide reads, in one-letter code: GTPase Obg (427 aa).

The 158-residue stretch at 1-158 (MFIDKAKIHL…LTVTLELKLI (158 aa)) folds into the Obg domain. One can recognise an OBG-type G domain in the interval 159–330 (ADVGLVGFPN…LLDYVSIKLK (172 aa)). GTP is bound by residues 165–172 (GFPNVGKS), 190–194 (FTTLT), 212–215 (DIPG), 282–285 (NKTD), and 311–313 (SAA). Residues serine 172 and threonine 192 each coordinate Mg(2+). One can recognise an OCT domain in the interval 347-427 (LYELKEKDTN…IYDVEFEYFH (81 aa)).

It belongs to the TRAFAC class OBG-HflX-like GTPase superfamily. OBG GTPase family. In terms of assembly, monomer. Mg(2+) serves as cofactor.

The protein resides in the cytoplasm. In terms of biological role, an essential GTPase which binds GTP, GDP and possibly (p)ppGpp with moderate affinity, with high nucleotide exchange rates and a fairly low GTP hydrolysis rate. Plays a role in control of the cell cycle, stress response, ribosome biogenesis and in those bacteria that undergo differentiation, in morphogenesis control. In Alkaliphilus metalliredigens (strain QYMF), this protein is GTPase Obg.